A 121-amino-acid chain; its full sequence is Group 1 truncated hemoglobin (121 aa).

An N-acetylmethionine modification is found at Met1. His73 lines the heme pocket.

Belongs to the truncated hemoglobin family. Group I subfamily. In terms of assembly, monomer. Heme serves as cofactor.

In Tetrahymena pyriformis, this protein is Group 1 truncated hemoglobin.